A 160-amino-acid polypeptide reads, in one-letter code: SsrA-binding protein (160 aa).

The tract at residues 136-160 is disordered; the sequence is KRDTVRERDSNRELQRAVRNKGKED.

This sequence belongs to the SmpB family.

The protein localises to the cytoplasm. Required for rescue of stalled ribosomes mediated by trans-translation. Binds to transfer-messenger RNA (tmRNA), required for stable association of tmRNA with ribosomes. tmRNA and SmpB together mimic tRNA shape, replacing the anticodon stem-loop with SmpB. tmRNA is encoded by the ssrA gene; the 2 termini fold to resemble tRNA(Ala) and it encodes a 'tag peptide', a short internal open reading frame. During trans-translation Ala-aminoacylated tmRNA acts like a tRNA, entering the A-site of stalled ribosomes, displacing the stalled mRNA. The ribosome then switches to translate the ORF on the tmRNA; the nascent peptide is terminated with the 'tag peptide' encoded by the tmRNA and targeted for degradation. The ribosome is freed to recommence translation, which seems to be the essential function of trans-translation. In Pseudomonas putida (strain W619), this protein is SsrA-binding protein.